Reading from the N-terminus, the 459-residue chain is Transcription factor mlcR (459 aa).

Residues 21–53 constitute a DNA-binding region (zn(2)-C6 fungal-type); the sequence is CDRCHAQKLKCTGSNANLVRAQCQRCQQAGLRC. 2 disordered regions span residues 64-84 and 135-170; these read LHKEAAAGTTRATETSQPMTA and DPESFPGGWPQPNTFRDDANSNESSGIPDLGYDFEG. A compositionally biased stretch (low complexity) spans 69–78; the sequence is AAGTTRATET.

It localises to the nucleus. In terms of biological role, transcription factor that regulates the gene cluster that mediates the biosynthesis of compactin, also known as mevastatin or ML-236B, and which acts as a potent competitive inhibitor of HMG-CoA reductase. Binds to the consensus-binding motif 5'-WCGG-N(6)-TCGG-3' of target genes. The polypeptide is Transcription factor mlcR (Penicillium citrinum).